The following is a 233-amino-acid chain: Probable fimbrial chaperone protein ElfD (233 aa).

An N-terminal signal peptide occupies residues 1 to 26 (MKTCITKGIVTVSLTAILLSCSSTWA).

It belongs to the periplasmic pilus chaperone family.

The protein resides in the periplasm. Part of the elfADCG fimbrial operon, which could be required for adherence to host epithelial cells. Could be required for the biogenesis of the ElfA fimbriae. This Escherichia coli O157:H7 protein is Probable fimbrial chaperone protein ElfD (elfD).